A 202-amino-acid polypeptide reads, in one-letter code: Holliday junction branch migration complex subunit RuvA (202 aa).

The tract at residues 1 to 63 (MIASLRGTVL…EDSMTLYGFT (63 aa)) is domain I. Residues 64–142 (SQDDRDMFHV…AFAPAESADL (79 aa)) form a domain II region. The flexible linker stretch occupies residues 143-148 (SSAAPA). Residues 149–202 (AAGPVVEDVVEALIGLGFTDKMARPVVESVVAEQPDAATPVVLRAALSQLGAKK) are domain III.

It belongs to the RuvA family. Homotetramer. Forms an RuvA(8)-RuvB(12)-Holliday junction (HJ) complex. HJ DNA is sandwiched between 2 RuvA tetramers; dsDNA enters through RuvA and exits via RuvB. An RuvB hexamer assembles on each DNA strand where it exits the tetramer. Each RuvB hexamer is contacted by two RuvA subunits (via domain III) on 2 adjacent RuvB subunits; this complex drives branch migration. In the full resolvosome a probable DNA-RuvA(4)-RuvB(12)-RuvC(2) complex forms which resolves the HJ.

The protein localises to the cytoplasm. Functionally, the RuvA-RuvB-RuvC complex processes Holliday junction (HJ) DNA during genetic recombination and DNA repair, while the RuvA-RuvB complex plays an important role in the rescue of blocked DNA replication forks via replication fork reversal (RFR). RuvA specifically binds to HJ cruciform DNA, conferring on it an open structure. The RuvB hexamer acts as an ATP-dependent pump, pulling dsDNA into and through the RuvAB complex. HJ branch migration allows RuvC to scan DNA until it finds its consensus sequence, where it cleaves and resolves the cruciform DNA. The chain is Holliday junction branch migration complex subunit RuvA from Corynebacterium aurimucosum (strain ATCC 700975 / DSM 44827 / CIP 107346 / CN-1) (Corynebacterium nigricans).